The primary structure comprises 222 residues: Protein-L-isoaspartate O-methyltransferase (222 aa).

The active site involves Ser69.

Belongs to the methyltransferase superfamily. L-isoaspartyl/D-aspartyl protein methyltransferase family.

Its subcellular location is the cytoplasm. The enzyme catalyses [protein]-L-isoaspartate + S-adenosyl-L-methionine = [protein]-L-isoaspartate alpha-methyl ester + S-adenosyl-L-homocysteine. In terms of biological role, catalyzes the methyl esterification of L-isoaspartyl residues in peptides and proteins that result from spontaneous decomposition of normal L-aspartyl and L-asparaginyl residues. It plays a role in the repair and/or degradation of damaged proteins. In Caulobacter vibrioides (strain NA1000 / CB15N) (Caulobacter crescentus), this protein is Protein-L-isoaspartate O-methyltransferase.